Here is a 248-residue protein sequence, read N- to C-terminus: Ribonuclease PH (248 aa).

Residues Arg-86 and 124–126 contribute to the phosphate site; that span reads GTR.

The protein belongs to the RNase PH family. In terms of assembly, homohexameric ring arranged as a trimer of dimers.

The enzyme catalyses tRNA(n+1) + phosphate = tRNA(n) + a ribonucleoside 5'-diphosphate. In terms of biological role, phosphorolytic 3'-5' exoribonuclease that plays an important role in tRNA 3'-end maturation. Removes nucleotide residues following the 3'-CCA terminus of tRNAs; can also add nucleotides to the ends of RNA molecules by using nucleoside diphosphates as substrates, but this may not be physiologically important. Probably plays a role in initiation of 16S rRNA degradation (leading to ribosome degradation) during starvation. The protein is Ribonuclease PH of Clostridium kluyveri (strain NBRC 12016).